The following is a 653-amino-acid chain: Exocyst complex component EXO70C1 (653 aa).

3 stretches are compositionally biased toward basic and acidic residues: residues 1 to 34 (MEKSGNHHHANESSENHDHKSEDHENKQHSDELH), 159 to 177 (SREEEKKNNNNNNHHDGSN), and 438 to 451 (NKPEPETKPRQQQR). 3 disordered regions span residues 1-50 (MEKS…HSLV), 159-190 (SREEEKKNNNNNNHHDGSNSDHNNSSTNDSDR), and 432-456 (EANQTDNKPEPETKPRQQQREDDEE).

Belongs to the EXO70 family. As to quaternary structure, interacts with ROH1A. Binds directly to B1L. Post-translationally, phosphorylated. In terms of tissue distribution, expressed in anthers, pollen and root trichoblast cells.

The protein localises to the cytoplasm. Its function is as follows. Required for global plant growth and for male transmission. Involved in the regulation of tip growth of pollen tube. The polypeptide is Exocyst complex component EXO70C1 (Arabidopsis thaliana (Mouse-ear cress)).